A 436-amino-acid chain; its full sequence is AMSH-like protease (436 aa).

At M1 the chain carries N-acetylmethionine. S25 and S242 each carry phosphoserine. An MPN domain is found at 269–397 (VVLPEDLCHK…IFRLTNAGML (129 aa)). Residues H347, H349, D360, H362, C402, H408, and H410 each coordinate Zn(2+). The JAMM motif motif lies at 347-360 (HTHPTQTAFLSSVD).

It belongs to the peptidase M67C family. Requires Zn(2+) as cofactor. In terms of tissue distribution, ubiquitously expressed.

Its activity is regulated as follows. Inhibited by UbV(SP.1), an ubiquitin variant that also inhibits STAMBP. Zinc metalloprotease that specifically cleaves 'Lys-63'-linked polyubiquitin chains. Acts as a positive regulator of the TORC1 signaling pathway by mediating 'Lys-63'-linked deubiquitination of SESN2, thereby inhibiting SESN2-interaction with the GATOR2 complex. Does not cleave 'Lys-48'-linked polyubiquitin chains. In Homo sapiens (Human), this protein is AMSH-like protease.